The primary structure comprises 290 residues: L-proline cis-3-hydroxylase 2 (290 aa).

Fe cation contacts are provided by H107, D109, and H158. R168 contributes to the 2-oxoglutarate binding site.

This sequence belongs to the L-proline cis-4-/cis-3-hydroxylase family. In terms of assembly, homodimer. Fe(2+) is required as a cofactor.

The catalysed reaction is L-proline + 2-oxoglutarate + O2 = cis-3-hydroxy-L-proline + succinate + CO2. Inhibited by metal ions such as Co(2+), Zn(2+), Ni(2+) or Cu(2+). Is also inhibited by EDTA in vitro. Functionally, dioxygenase that catalyzes the 2-oxoglutarate-dependent selective hydroxylation of free L-proline to cis-3-hydroxy-L-proline (cis-3-Hyp). The protein is L-proline cis-3-hydroxylase 2 of Streptomyces sp.